A 228-amino-acid polypeptide reads, in one-letter code: L-ribulose-5-phosphate 4-epimerase UlaF (228 aa).

Substrate-binding positions include Gly26–Asn27, Ser43–Gly44, and Ser72–Ser73. Positions 74, 93, and 95 each coordinate Zn(2+). Asp118 acts as the Proton donor/acceptor in catalysis. His167 lines the Zn(2+) pocket. Tyr225 acts as the Proton donor/acceptor in catalysis.

It belongs to the aldolase class II family. AraD/FucA subfamily. It depends on Zn(2+) as a cofactor.

It carries out the reaction L-ribulose 5-phosphate = D-xylulose 5-phosphate. It participates in cofactor degradation; L-ascorbate degradation; D-xylulose 5-phosphate from L-ascorbate: step 4/4. In terms of biological role, catalyzes the isomerization of L-ribulose 5-phosphate to D-xylulose 5-phosphate. Is involved in the anaerobic L-ascorbate utilization. This is L-ribulose-5-phosphate 4-epimerase UlaF from Escherichia coli O81 (strain ED1a).